Here is a 1762-residue protein sequence, read N- to C-terminus: MADAAASPVGKRLLLLFADPTASASASAPTAAAVVSGDPGPALRTRAWRAGTVRAMSGAVPQDLAIFVEFDGCNWKQHSWVKVHAEDVLALLLEGSLVWAPRKDPVLLQGTRVPVAQWPALTFTPLVDKLGLGSVVPVEYLVDRELRFLSDANGMHLFQMGTDVQNQILLEHAALRETVNALISDQKLQEIFSRGPYSVQGHRVKVYQPEGEEVWLCGVVSRQDSVTRLMEVSITETGEVKSVDPRLTHVMLMDSSTPQSEGGTIKAVKSSKGKKKRESIEGRDGRRRKSASDSGCDPATKKLKGDRGEVDSNGSDGGEASRGPWKGGNASGEPGLEQRAKQPPSTFVPQINRNIRFATYTKENGRTLVVQDEPVGGDTPVPFTPYASATGQTPLAPEVGGAENKEAGKTLEQVSQGMVASAAVVTTASSTPTTVRISDTGLASGTGPEKQKGSWSQASGENSRNSSLASSGFGVSLSSLSQPLTFGSGRSQSNGVLATDNKPLGFSFSCSSASESQKDSDLSKNLFFQCMSQNVPSTNYLSRVSESVADDSSSRDSFTQSLESLTSGLCKGRSVLGADTQPGPKAGSSVDRKVPAESMPTLTPAFPRSLLNTRTPENHENLFLQPPKLSREEPSNPFLAFVEKVEHSPFSSFVSQASGSSSSATSVTSKATASWPESHSSAESAPLAKKKPLFITTDSSKLVSGVLGSALSTGSPSLSAVGNGRSSSPTNSLTQPIEMPTLSSSPTEERPTVGPGQQDNPLLKTFSTVFGRHSGSFLSAPAEFAQENKAPFEAVKRFSLDERSLACRQDSDSSTNSDLSDLSDSEEQLQAKSGLKGIPEHLMGKLGPNGERSAELLLGKGKGKQAPKGRPRTAPLKVGQSVLKDVSKVRKLKQSGEPFLQDGSCINVAPHLHKCRECRLERYRKFKEQEQDDSTVACRFFHFRRLVFTRKGVLRVEGFLSPQQSDPDAMNLWIPSSSLAEGIDLETSKYILANVGDQFCQLVMSEKEAMMMVEPHQKVAWKRAVRGVREMCDVCETTLFNIHWVCRKCGFGVCLDCYRLRKSRPRSETEEMGDEEVFSWLKCAKGQSHEPENLMPTQIIPGTALYNIGDMVHAARGKWGIKANCPCISRQSKSVLRPAVTNGISQLPSVTPSASSGNETTFSSGGGAAAVTNPEPDQVPKGAGTDGRSEEPLKAEGSASNSNSELKAIRPPCPDTAPPSSALHWLADLATQKAKEETKDAGSLRSVLNKESHSPFGLDSFNSTAKVSPLTPKLFNSLLLGPTASNSKTEGSSLRDLLHSGPGKLPQTPLDTGIPFPPVFSSSSAVAKSKASLPDFLDHIIASVVENKKTSDPSKRSCNLTDTQKEVKEMAMGLNVLDPHTSHSWLCDGRLLCLHDPSNKNNWKIFRECWKQGQPVLVSGVHKKLKSELWKPEAFSQEFGDQDVDLVNCRNCAIISDVKVRDFWDGFEIICKRLRSEDGQPMVLKLKDWPPGEDFRDMMPTRFEDLMENLPLPEYTKRDGRLNLASRLPSYFVRPDLGPKMYNAYGLITAEDRRVGTTNLHLDVSDAVNVMVYVGIPVGEGAHDEEVLKTIDEGDADEVTKQRIHDGKEKPGALWHIYAAKDAEKIRELLRKVGEEQGQENPPDHDPIHDQSWYLDQILRKRLFEEYGVQGWAIVQFLGDAVFIPAGAPHQVHNLYSCIKVAEDFVSPEHVKHCFRLTQEFRHLSNTHTNHEDKLQVKNIIYHAVKDAVGTLKAHESKLARS.

N-acetylalanine is present on alanine 2. Disordered regions lie at residues 253-350 (MDSS…FVPQ) and 426-468 (TTAS…NSSL). The segment covering 299-310 (ATKKLKGDRGEV) has biased composition (basic and acidic residues). Low complexity predominate over residues 426-435 (TTASSTPTTV). Polar residues predominate over residues 453–465 (GSWSQASGENSRN). A phosphoserine mark is found at serine 493, serine 547, serine 557, and serine 561. The disordered stretch occupies residues 574–613 (SVLGADTQPGPKAGSSVDRKVPAESMPTLTPAFPRSLLNT). Threonine 615 carries the phosphothreonine modification. The span at 713 to 746 (TGSPSLSAVGNGRSSSPTNSLTQPIEMPTLSSSP) shows a compositional bias: polar residues. Residues 713-763 (TGSPSLSAVGNGRSSSPTNSLTQPIEMPTLSSSPTEERPTVGPGQQDNPLL) form a disordered region. Serine 767, serine 774, and serine 779 each carry phosphoserine. Lysine 789 participates in a covalent cross-link: Glycyl lysine isopeptide (Lys-Gly) (interchain with G-Cter in SUMO2). Serine 799 bears the Phosphoserine mark. The interval 806–853 (ACRQDSDSSTNSDLSDLSDSEEQLQAKSGLKGIPEHLMGKLGPNGERS) is disordered. The segment at 1032-1057 (CDVCETTLFNIHWVCRKCGFGVCLDC) adopts a C6-type zinc-finger fold. The segment covering 1146–1163 (QLPSVTPSASSGNETTFS) has biased composition (polar residues). Residues 1146-1217 (QLPSVTPSAS…AIRPPCPDTA (72 aa)) are disordered. Residues serine 1254 and serine 1260 each carry the phosphoserine modification. The interval 1285–1306 (SNSKTEGSSLRDLLHSGPGKLP) is disordered. Positions 1294–1298 (LRDLL) match the LXXLL motif motif. One can recognise a JmjC domain in the interval 1499–1722 (MPTRFEDLME…HCFRLTQEFR (224 aa)). Histidine 1561, aspartate 1563, and histidine 1690 together coordinate Fe cation.

It belongs to the JHDM2 histone demethylase family. The cofactor is Fe(2+).

Its subcellular location is the nucleus. The catalysed reaction is N(6),N(6)-dimethyl-L-lysyl(9)-[histone H3] + 2 2-oxoglutarate + 2 O2 = L-lysyl(9)-[histone H3] + 2 formaldehyde + 2 succinate + 2 CO2. Functionally, histone demethylase that specifically demethylates 'Lys-9' of histone H3, thereby playing a central role in histone code. Demethylation of Lys residue generates formaldehyde and succinate May have tumor suppressor activity. This is Lysine-specific demethylase 3B (Kdm3b) from Mus musculus (Mouse).